Reading from the N-terminus, the 553-residue chain is 5'-nucleotidase (553 aa).

The first 21 residues, 1-21, serve as a signal peptide directing secretion; the sequence is MKQGLILKSVLSAAIIASLAG. Cysteine 22 carries N-palmitoyl cysteine lipidation. Residue cysteine 22 is the site of S-diacylglycerol cysteine attachment. 7 residues coordinate a divalent metal cation: aspartate 45, histidine 47, aspartate 88, asparagine 120, histidine 221, histidine 256, and glutamine 258. Residues phenylalanine 432 and 501-507 each bind substrate; that span reads FNAAGGD.

This sequence belongs to the 5'-nucleotidase family. Requires chloride as cofactor. The cofactor is Mg(2+).

Its subcellular location is the cell outer membrane. The catalysed reaction is a ribonucleoside 5'-phosphate + H2O = a ribonucleoside + phosphate. In terms of biological role, degradation of extracellular 5'-nucleotides for nutritional needs. This Vibrio cholerae serotype O1 (strain ATCC 39315 / El Tor Inaba N16961) protein is 5'-nucleotidase (nutA).